A 636-amino-acid chain; its full sequence is Biosynthetic arginine decarboxylase (636 aa).

Lysine 101 is subject to N6-(pyridoxal phosphate)lysine. 286-296 provides a ligand contact to substrate; sequence FDVGGGLAVDY.

Belongs to the Orn/Lys/Arg decarboxylase class-II family. SpeA subfamily. It depends on Mg(2+) as a cofactor. Pyridoxal 5'-phosphate serves as cofactor.

The enzyme catalyses L-arginine + H(+) = agmatine + CO2. The protein operates within amine and polyamine biosynthesis; agmatine biosynthesis; agmatine from L-arginine: step 1/1. Functionally, catalyzes the biosynthesis of agmatine from arginine. This Shewanella frigidimarina (strain NCIMB 400) protein is Biosynthetic arginine decarboxylase.